We begin with the raw amino-acid sequence, 220 residues long: Deoxyribose-phosphate aldolase (220 aa).

Asp-89 serves as the catalytic Proton donor/acceptor. Lys-151 (schiff-base intermediate with acetaldehyde) is an active-site residue. The active-site Proton donor/acceptor is the Lys-180.

The protein belongs to the DeoC/FbaB aldolase family. DeoC type 1 subfamily.

The protein resides in the cytoplasm. It catalyses the reaction 2-deoxy-D-ribose 5-phosphate = D-glyceraldehyde 3-phosphate + acetaldehyde. It functions in the pathway carbohydrate degradation; 2-deoxy-D-ribose 1-phosphate degradation; D-glyceraldehyde 3-phosphate and acetaldehyde from 2-deoxy-alpha-D-ribose 1-phosphate: step 2/2. In terms of biological role, catalyzes a reversible aldol reaction between acetaldehyde and D-glyceraldehyde 3-phosphate to generate 2-deoxy-D-ribose 5-phosphate. The sequence is that of Deoxyribose-phosphate aldolase from Streptococcus pneumoniae (strain Hungary19A-6).